The chain runs to 411 residues: Serine--tRNA ligase (411 aa).

Thr-226 to Glu-228 is a binding site for L-serine. Arg-257 to Glu-259 serves as a coordination point for ATP. Glu-280 contacts L-serine. Glu-344–Ser-347 contributes to the ATP binding site. Ser-379 is a binding site for L-serine.

It belongs to the class-II aminoacyl-tRNA synthetase family. Type-1 seryl-tRNA synthetase subfamily. Homodimer. The tRNA molecule binds across the dimer.

It localises to the cytoplasm. The enzyme catalyses tRNA(Ser) + L-serine + ATP = L-seryl-tRNA(Ser) + AMP + diphosphate + H(+). The catalysed reaction is tRNA(Sec) + L-serine + ATP = L-seryl-tRNA(Sec) + AMP + diphosphate + H(+). Its pathway is aminoacyl-tRNA biosynthesis; selenocysteinyl-tRNA(Sec) biosynthesis; L-seryl-tRNA(Sec) from L-serine and tRNA(Sec): step 1/1. Its function is as follows. Catalyzes the attachment of serine to tRNA(Ser). Is also able to aminoacylate tRNA(Sec) with serine, to form the misacylated tRNA L-seryl-tRNA(Sec), which will be further converted into selenocysteinyl-tRNA(Sec). In Campylobacter jejuni subsp. jejuni serotype O:2 (strain ATCC 700819 / NCTC 11168), this protein is Serine--tRNA ligase.